Here is a 255-residue protein sequence, read N- to C-terminus: 5'-nucleotidase SurE (255 aa).

Residues Asp8, Asp9, Ser40, and Asn92 each coordinate a divalent metal cation.

Belongs to the SurE nucleotidase family. Requires a divalent metal cation as cofactor.

Its subcellular location is the cytoplasm. It carries out the reaction a ribonucleoside 5'-phosphate + H2O = a ribonucleoside + phosphate. Nucleotidase that shows phosphatase activity on nucleoside 5'-monophosphates. In Brucella abortus (strain S19), this protein is 5'-nucleotidase SurE.